Here is a 163-residue protein sequence, read N- to C-terminus: Phosphopantetheine adenylyltransferase (163 aa).

Thr9 contacts substrate. ATP-binding positions include 9–10 (TF) and His17. The substrate site is built by Lys41, Leu73, and Arg87. Residues 88–90 (GLR), Glu98, and 123–129 (YQFISGT) contribute to the ATP site.

This sequence belongs to the bacterial CoaD family. In terms of assembly, homohexamer. It depends on Mg(2+) as a cofactor.

The protein localises to the cytoplasm. It carries out the reaction (R)-4'-phosphopantetheine + ATP + H(+) = 3'-dephospho-CoA + diphosphate. It functions in the pathway cofactor biosynthesis; coenzyme A biosynthesis; CoA from (R)-pantothenate: step 4/5. Functionally, reversibly transfers an adenylyl group from ATP to 4'-phosphopantetheine, yielding dephospho-CoA (dPCoA) and pyrophosphate. The chain is Phosphopantetheine adenylyltransferase from Herminiimonas arsenicoxydans.